Reading from the N-terminus, the 588-residue chain is MIQHPRIGIRPTIDGRRQGVRESLEVQTMNMAKSVADLISSTLKYPDGEPVECVISPSTIGRVPEAAASHELFKKSNVCATITVTPCWCYGSETMDMSPDIPHAIWGFNGTERPGAVYLAAVLASHAQKGIPAFGIYGRDVQEASDTDIPEDVKEKLLRYARAALATGLMRDTAYLSMGSVSMGIGGSIVNPDFFQEYLGMRNESVDMTEFTRRMDRGIYDPEEFERALKWVKENVKEGFDHNREDLVLSREEKDRQWEFVIKMFMIGRDLMVGNPRLAELGFEEEAVGHHALVAGFQGQRQWTDHFPNGDFMETFLNTQFDWNGIRKPFVFATENDSLNGVSMLFNYLLTNTPQIFADVRTYWSPEAVKRVTGHTLEGRAAAGFLHLINSGSCTLDGTGQATRDGKPIMKPFWELEESEVQAMLENTDFPPANREYFRGGGFSTRFLTKGDMPVTMVRLNLLKGVGPVLQIAEGYTLELPEDVHHTLDNRTDPGWPTTWFAPRLTGKGAFKSVYDVMNNWGANHGAITYGHIGADLITLASMLRIPVNMHNVPEEDIFRPKNWSLFGTEDLESADYRACQLLGPLHK.

Catalysis depends on proton acceptor residues glutamate 335 and aspartate 359. Positions 335, 359, and 525 each coordinate Mn(2+).

Belongs to the L-fucose isomerase family. Requires Mn(2+) as cofactor.

The protein localises to the cytoplasm. The enzyme catalyses L-fucose = L-fuculose. It participates in carbohydrate degradation; L-fucose degradation; L-lactaldehyde and glycerone phosphate from L-fucose: step 1/3. Its function is as follows. Converts the aldose L-fucose into the corresponding ketose L-fuculose. The sequence is that of L-fucose isomerase from Streptococcus pneumoniae serotype 4 (strain ATCC BAA-334 / TIGR4).